The following is a 471-amino-acid chain: UDP-N-acetylmuramate--L-alanine ligase (471 aa).

Residue 114–120 (GTHGKTT) participates in ATP binding.

Belongs to the MurCDEF family.

The protein resides in the cytoplasm. The catalysed reaction is UDP-N-acetyl-alpha-D-muramate + L-alanine + ATP = UDP-N-acetyl-alpha-D-muramoyl-L-alanine + ADP + phosphate + H(+). The protein operates within cell wall biogenesis; peptidoglycan biosynthesis. Its function is as follows. Cell wall formation. This chain is UDP-N-acetylmuramate--L-alanine ligase, found in Rhizobium johnstonii (strain DSM 114642 / LMG 32736 / 3841) (Rhizobium leguminosarum bv. viciae).